The sequence spans 615 residues: Elongation factor 4 (615 aa).

The tr-type G domain maps to 14–200 (SRIRNFCIIA…KVVELIPAPS (187 aa)). Residues 26 to 31 (DHGKST) and 147 to 150 (NKID) contribute to the GTP site.

Belongs to the TRAFAC class translation factor GTPase superfamily. Classic translation factor GTPase family. LepA subfamily.

Its subcellular location is the cell membrane. The catalysed reaction is GTP + H2O = GDP + phosphate + H(+). Functionally, required for accurate and efficient protein synthesis under certain stress conditions. May act as a fidelity factor of the translation reaction, by catalyzing a one-codon backward translocation of tRNAs on improperly translocated ribosomes. Back-translocation proceeds from a post-translocation (POST) complex to a pre-translocation (PRE) complex, thus giving elongation factor G a second chance to translocate the tRNAs correctly. Binds to ribosomes in a GTP-dependent manner. This chain is Elongation factor 4, found in Corynebacterium efficiens (strain DSM 44549 / YS-314 / AJ 12310 / JCM 11189 / NBRC 100395).